We begin with the raw amino-acid sequence, 284 residues long: MHIFGKILGAFFGFLFGGPFGAIFGIFLGHQFDKARRLNQAGFQSGTFGAGPSQAERQEEFFKSAFSVMGHVAKAKGQVTKEEIQLATIMMDRMNLTLEQKRAAQDAFRDGKESDFPLEQVLERVKIATGGRFDLLQFFLELQVSSAFADGDVHPSERQVLHRIARGLGFSSEQLERRLRMQEAAFRFQQGGGFGGSQQQSHSGQQWQQPSSRHQLADAYEVLGVSESASAQEVKRAYRKLMNEHHPDKLMAKGLPPEMMNVAKEKSQQIQHAYELIRKEKGIK.

The Periplasmic segment spans residues 1–6; that stretch reads MHIFGK. A helical transmembrane segment spans residues 7-30; sequence ILGAFFGFLFGGPFGAIFGIFLGH. Topologically, residues 31–284 are cytoplasmic; the sequence is QFDKARRLNQ…ELIRKEKGIK (254 aa). The segment at 190–211 is disordered; it reads QGGGFGGSQQQSHSGQQWQQPS. Low complexity predominate over residues 197–211; sequence SQQQSHSGQQWQQPS. One can recognise a J domain in the interval 218 to 284; it reads DAYEVLGVSE…ELIRKEKGIK (67 aa).

Homodimer.

It localises to the cell inner membrane. Functionally, regulatory DnaK co-chaperone. Direct interaction between DnaK and DjlA is needed for the induction of the wcaABCDE operon, involved in the synthesis of a colanic acid polysaccharide capsule, possibly through activation of the RcsB/RcsC phosphotransfer signaling pathway. The colanic acid capsule may help the bacterium survive conditions outside the host. The polypeptide is Co-chaperone protein DjlA (Vibrio cholerae serotype O1 (strain ATCC 39315 / El Tor Inaba N16961)).